Reading from the N-terminus, the 259-residue chain is UPF0246 protein NMA1114 (259 aa).

Belongs to the UPF0246 family.

The polypeptide is UPF0246 protein NMA1114 (Neisseria meningitidis serogroup A / serotype 4A (strain DSM 15465 / Z2491)).